A 207-amino-acid chain; its full sequence is Urease accessory protein UreG (207 aa).

Residue glycine 16–threonine 23 coordinates GTP.

Belongs to the SIMIBI class G3E GTPase family. UreG subfamily. In terms of assembly, homodimer. UreD, UreF and UreG form a complex that acts as a GTP-hydrolysis-dependent molecular chaperone, activating the urease apoprotein by helping to assemble the nickel containing metallocenter of UreC. The UreE protein probably delivers the nickel.

The protein localises to the cytoplasm. Facilitates the functional incorporation of the urease nickel metallocenter. This process requires GTP hydrolysis, probably effectuated by UreG. This Shewanella halifaxensis (strain HAW-EB4) protein is Urease accessory protein UreG.